Reading from the N-terminus, the 196-residue chain is DNA replication complex GINS protein PSF1 (196 aa).

It belongs to the GINS1/PSF1 family. In terms of assembly, component of the GINS complex which is a heterotetramer of gins1/psf1, gins2/psf2, gins3/psf3 and gins4/sld5. Component of the CMG helicase complex, composed of the mcm2-7 complex, the GINS complex and cdc45.

The protein localises to the nucleus. Its subcellular location is the chromosome. Its function is as follows. Required for correct functioning of the GINS complex, a complex that plays an essential role in the initiation of DNA replication, and progression of DNA replication forks. GINS complex is a core component of CDC45-MCM-GINS (CMG) helicase, the molecular machine that unwinds template DNA during replication, and around which the replisome is built. This is DNA replication complex GINS protein PSF1 from Xenopus laevis (African clawed frog).